Here is a 154-residue protein sequence, read N- to C-terminus: Ribonuclease H (154 aa).

An RNase H type-1 domain is found at 1–142 (MLKHIDLYTD…CDELARDAAS (142 aa)). Mg(2+)-binding residues include aspartate 10, glutamate 48, aspartate 70, and aspartate 134. Positions 126–147 (GHPENERCDELARDAASGKELA) are enriched in basic and acidic residues. The segment at 126-154 (GHPENERCDELARDAASGKELAEDTGYQP) is disordered.

Belongs to the RNase H family. As to quaternary structure, monomer. The cofactor is Mg(2+).

It localises to the cytoplasm. It catalyses the reaction Endonucleolytic cleavage to 5'-phosphomonoester.. In terms of biological role, endonuclease that specifically degrades the RNA of RNA-DNA hybrids. This Aeromonas salmonicida (strain A449) protein is Ribonuclease H.